The primary structure comprises 224 residues: UPF0758 protein PBPRA0202 (224 aa).

One can recognise an MPN domain in the interval 102–224; it reads VLTSPQHTRH…IVSFSEQGWL (123 aa). Residues histidine 173, histidine 175, and aspartate 186 each coordinate Zn(2+). Residues 173 to 186 carry the JAMM motif motif; the sequence is HNHPSGVAEPSQSD.

This sequence belongs to the UPF0758 family.

This is UPF0758 protein PBPRA0202 from Photobacterium profundum (strain SS9).